The chain runs to 151 residues: MTIWIDADACPVPVREMVLRAGQRTATALVFVANSPLPVPRRALVKTVQVAQGFDVADNYISQHAVINDLVITQDIPLAAEIVEKGITALNPRGELYTEANIRQRLAMRNLSEELRSMGQISGGPNKFGDKEKQNFANALDRWLQKAKKTT.

The protein belongs to the UPF0178 family.

This Psychromonas ingrahamii (strain DSM 17664 / CCUG 51855 / 37) protein is UPF0178 protein Ping_0754.